The following is a 231-amino-acid chain: NADH-ubiquinone oxidoreductase chain 4 (231 aa).

Helical transmembrane passes span 1–21, 34–54, 63–85, 89–111, 128–148, and 156–176; these read PIAGSMVLAAILLKLGGYGMI, MFMPFIVLALWGAILANLTCL, IAYSSISHMGLVVAAIIIQTPWG, AMALMIAHGFTSSALFCLANTTY, ILPMTTTWWLLANLMNIAIPP, and FLIMSALFNWAPTTIILLGLS.

It belongs to the complex I subunit 4 family.

It is found in the mitochondrion membrane. The enzyme catalyses a ubiquinone + NADH + 5 H(+)(in) = a ubiquinol + NAD(+) + 4 H(+)(out). Its function is as follows. Core subunit of the mitochondrial membrane respiratory chain NADH dehydrogenase (Complex I) that is believed to belong to the minimal assembly required for catalysis. Complex I functions in the transfer of electrons from NADH to the respiratory chain. The immediate electron acceptor for the enzyme is believed to be ubiquinone. The polypeptide is NADH-ubiquinone oxidoreductase chain 4 (MT-ND4) (Bothriechis schlegelii (Eyelash palm pitviper)).